Here is a 1414-residue protein sequence, read N- to C-terminus: Phenyloxazoline synthase MbtB (1414 aa).

The Carrier 1 domain maps to 5–78 (TACSEIIRAE…AWSQLVSAGT (74 aa)). At Ser39 the chain carries O-(pantetheine 4'-phosphoryl)serine. The segment at 96–394 (EGEPFPVAPM…SSLLLDVDLT (299 aa)) is condensation/cyclization. The tract at residues 579-975 (SYAQLRDQAS…RLPGVHAAAA (397 aa)) is adenylation. The region spanning 1057–1135 (APRTVLQRAL…ALAQLLTGRE (79 aa)) is the Carrier 2 domain. Residue Ser1094 is modified to O-(pantetheine 4'-phosphoryl)serine. Residues 1188 to 1413 (GAVLVFPHAG…AVARMVSADV (226 aa)) are thioesterase.

Belongs to the ATP-dependent AMP-binding enzyme family. MbtB subfamily. Pantetheine 4'-phosphate is required as a cofactor. Post-translationally, 4'-phosphopantetheine is transferred from CoA to a specific serine in each of the two carrier protein domains, leading to their activation from apo to holo forms.

It participates in siderophore biosynthesis; mycobactin biosynthesis. Functionally, involved in the initial steps of the mycobactin biosynthetic pathway. Putatively couples activated salicylic acid with serine or threonine and cyclizes this precursor to the hydroxyphenyloxazoline ring system present in this class of siderophores. Essential for growth in macrophages. In Mycobacterium tuberculosis (strain CDC 1551 / Oshkosh), this protein is Phenyloxazoline synthase MbtB (mbtB).